The sequence spans 334 residues: E3 ubiquitin-protein ligase ATL4 (334 aa).

The segment at 1-20 (MESLINPSHGGGNYDSHSSS) is disordered. The chain crosses the membrane as a helical span at residues 28–48 (VLVIILILLMTLLISVSICFL). The RING-type; atypical zinc-finger motif lies at 117 to 159 (CAVCLSKFEPEDQLRLLPLCCHAFHADCIDIWLVSNQTCPLCR).

This sequence belongs to the RING-type zinc finger family. ATL subfamily.

The protein resides in the membrane. It catalyses the reaction S-ubiquitinyl-[E2 ubiquitin-conjugating enzyme]-L-cysteine + [acceptor protein]-L-lysine = [E2 ubiquitin-conjugating enzyme]-L-cysteine + N(6)-ubiquitinyl-[acceptor protein]-L-lysine.. The protein operates within protein modification; protein ubiquitination. Its function is as follows. E3 ubiquitin-protein ligase able to catalyze polyubiquitination with ubiquitin-conjugating enzyme E2 UBC8 in vitro. The chain is E3 ubiquitin-protein ligase ATL4 from Arabidopsis thaliana (Mouse-ear cress).